A 1010-amino-acid polypeptide reads, in one-letter code: Trifunctional purine biosynthetic protein adenosine-3 (1010 aa).

Ala-2 carries the post-translational modification N-acetylalanine. The residue at position 10 (Ser-10) is a Phosphoserine. The 208-residue stretch at 111–318 folds into the ATP-grasp domain; sequence KEFMDRHGIP…LYEVIQSTLD (208 aa). ATP contacts are provided by residues 190 to 193, Glu-197, Arg-220, and Asn-229; that span reads EELL. Mg(2+) contacts are provided by Glu-288 and Asn-290. An N6-acetyllysine modification is found at Lys-350. The tract at residues 434–809 is AIRS domain; the sequence is SLTYKESGVD…HFSFEKKKAR (376 aa). Phosphoserine is present on Ser-440. A Phosphothreonine modification is found at Thr-682. Phosphoserine is present on residues Ser-796 and Ser-802. Residues 810 to 1010 form a GART domain region; the sequence is VAVLISGTGS…NGKICWVKEE (201 aa). A N(1)-(5-phospho-beta-D-ribosyl)glycinamide-binding site is contributed by 818–820; that stretch reads GSN. (6R)-10-formyltetrahydrofolate contacts are provided by residues Arg-871, 896 to 899, and Asn-913; that span reads MRIL. The active-site Proton donor is the His-915. 947-951 lines the (6R)-10-formyltetrahydrofolate pocket; sequence AEDVD. 977 to 980 lines the N(1)-(5-phospho-beta-D-ribosyl)glycinamide pocket; that stretch reads KLAE.

The protein in the N-terminal section; belongs to the GARS family. It in the central section; belongs to the AIR synthase family. This sequence in the C-terminal section; belongs to the GART family. In terms of assembly, homodimer. Requires Mg(2+) as cofactor. Mn(2+) serves as cofactor.

It catalyses the reaction 5-phospho-beta-D-ribosylamine + glycine + ATP = N(1)-(5-phospho-beta-D-ribosyl)glycinamide + ADP + phosphate + H(+). The enzyme catalyses N(1)-(5-phospho-beta-D-ribosyl)glycinamide + (6R)-10-formyltetrahydrofolate = N(2)-formyl-N(1)-(5-phospho-beta-D-ribosyl)glycinamide + (6S)-5,6,7,8-tetrahydrofolate + H(+). The catalysed reaction is 2-formamido-N(1)-(5-O-phospho-beta-D-ribosyl)acetamidine + ATP = 5-amino-1-(5-phospho-beta-D-ribosyl)imidazole + ADP + phosphate + H(+). Its pathway is purine metabolism; IMP biosynthesis via de novo pathway; 5-amino-1-(5-phospho-D-ribosyl)imidazole from N(2)-formyl-N(1)-(5-phospho-D-ribosyl)glycinamide: step 2/2. It functions in the pathway purine metabolism; IMP biosynthesis via de novo pathway; N(1)-(5-phospho-D-ribosyl)glycinamide from 5-phospho-alpha-D-ribose 1-diphosphate: step 2/2. The protein operates within purine metabolism; IMP biosynthesis via de novo pathway; N(2)-formyl-N(1)-(5-phospho-D-ribosyl)glycinamide from N(1)-(5-phospho-D-ribosyl)glycinamide (10-formyl THF route): step 1/1. Functionally, trifunctional enzyme that catalyzes three distinct reactions as part of the 'de novo' inosine monophosphate biosynthetic pathway. This is Trifunctional purine biosynthetic protein adenosine-3 (GART) from Homo sapiens (Human).